The sequence spans 472 residues: Trigger factor (472 aa).

In terms of domain architecture, PPIase FKBP-type spans 174 to 261 (GDIALVSFKG…LEDLKIKELP (88 aa)). Positions 433–472 (NNTVVEKPPEKARDQIKEKSSKKKTTKTNKEKKSSKTPKS) are disordered. Residues 439–451 (KPPEKARDQIKEK) show a composition bias toward basic and acidic residues.

Belongs to the FKBP-type PPIase family. Tig subfamily.

It is found in the cytoplasm. The enzyme catalyses [protein]-peptidylproline (omega=180) = [protein]-peptidylproline (omega=0). Functionally, involved in protein export. Acts as a chaperone by maintaining the newly synthesized protein in an open conformation. Functions as a peptidyl-prolyl cis-trans isomerase. This Prochlorococcus marinus (strain NATL1A) protein is Trigger factor.